A 323-amino-acid chain; its full sequence is L-lactate dehydrogenase (323 aa).

NAD(+) is bound by residues V16, N37, and 81-82 (GA). Substrate contacts are provided by residues Q84, R90, and 122–125 (NPVD). Residues 120–122 (ATN) and S145 each bind NAD(+). 150–153 (DSAR) provides a ligand contact to substrate. The Proton acceptor role is filled by H177. Phosphotyrosine is present on Y221. T230 provides a ligand contact to substrate.

It belongs to the LDH/MDH superfamily. LDH family. Homotetramer.

It localises to the cytoplasm. The enzyme catalyses (S)-lactate + NAD(+) = pyruvate + NADH + H(+). The protein operates within fermentation; pyruvate fermentation to lactate; (S)-lactate from pyruvate: step 1/1. In terms of biological role, catalyzes the conversion of lactate to pyruvate. The polypeptide is L-lactate dehydrogenase (Limosilactobacillus reuteri (Lactobacillus reuteri)).